The following is a 168-amino-acid chain: Profilin-3 (168 aa).

The tract at residues 14–36 (LSLEHSDKPQRRSRAKVKKKKKT) is disordered. Residues 24 to 36 (RRSRAKVKKKKKT) show a composition bias toward basic residues.

It belongs to the profilin family. In terms of assembly, occurs in many kinds of cells as a complex with monomeric actin in a 1:1 ratio. Binding to the poly-proline motif of formins induces formation of oligomers through the N-terminal hydrophobic residues of PRF3. In terms of tissue distribution, expressed in roots, rosette leaves, cauline leaves, stems and flowers.

The protein resides in the cytoplasm. Its subcellular location is the cytoskeleton. Its function is as follows. Binds to actin monomers and regulates the organization of the actin cytoskeleton. Can increase the critical concentration (Cc) of actin assembly in vitro. Acts as a downstream effector of the hydrogen sulfide signaling to regulate the assembly and depolymerization of F-actin. At high concentrations, profilin prevents the polymerization of actin, whereas it enhances it at low concentrations. Binding to the poly-proline motif of formin induces oligomerization of PRF3. PRF3 oligomers inhibit formin-mediated actin assembly to modulate plant immunity triggered by pathogen-associated molecular patterns (PAMPs). The protein is Profilin-3 of Arabidopsis thaliana (Mouse-ear cress).